A 206-amino-acid polypeptide reads, in one-letter code: Ion-translocating oxidoreductase complex subunit G (206 aa).

Residues 9-29 (GITLALFAAGSTGLTAVINQM) form a helical membrane-spanning segment. Threonine 174 bears the FMN phosphoryl threonine mark.

The protein belongs to the RnfG family. In terms of assembly, the complex is composed of six subunits: RsxA, RsxB, RsxC, RsxD, RsxE and RsxG. The cofactor is FMN.

The protein localises to the cell inner membrane. In terms of biological role, part of a membrane-bound complex that couples electron transfer with translocation of ions across the membrane. Required to maintain the reduced state of SoxR. This Salmonella typhimurium (strain LT2 / SGSC1412 / ATCC 700720) protein is Ion-translocating oxidoreductase complex subunit G.